A 1096-amino-acid chain; its full sequence is Eukaryotic translation initiation factor 3 subunit A (1096 aa).

Residues 323 to 502 (QATRVLLATL…GSIHFGAADA (180 aa)) form the PCI domain. Coiled coils occupy residues 591–643 (SERQ…IDRK), 677–761 (SVLR…RMQK), and 811–839 (KEGA…ERRA). The span at 808 to 852 (ELPKEGAEERMASAREVAEQTRRDEQEKERRAVRESQRPSKREIV) shows a compositional bias: basic and acidic residues. The segment at 808 to 1096 (ELPKEGAEER…ADDDRNWRQK (289 aa)) is disordered. The segment covering 865 to 875 (AQPTQPRTISS) has biased composition (polar residues). Composition is skewed to basic and acidic residues over residues 878–890 (FGER…RYRE), 933–942 (SNREQARGEA), and 955–973 (QRDR…KRGE). A compositionally biased stretch (polar residues) spans 1008 to 1023 (DSSQRTSAATPTTQPW). The span at 1085-1096 (GAADDDRNWRQK) shows a compositional bias: basic and acidic residues.

It belongs to the eIF-3 subunit A family. In terms of assembly, component of the eukaryotic translation initiation factor 3 (eIF-3) complex.

It is found in the cytoplasm. Its function is as follows. RNA-binding component of the eukaryotic translation initiation factor 3 (eIF-3) complex, which is involved in protein synthesis of a specialized repertoire of mRNAs and, together with other initiation factors, stimulates binding of mRNA and methionyl-tRNAi to the 40S ribosome. The eIF-3 complex specifically targets and initiates translation of a subset of mRNAs involved in cell proliferation. The sequence is that of Eukaryotic translation initiation factor 3 subunit A from Brugia malayi (Filarial nematode worm).